Reading from the N-terminus, the 199-residue chain is Desiccation stress protein DSP-22, chloroplastic (199 aa).

A chloroplast-targeting transit peptide spans 1–52 (MASSTCYATIPAMSCRGQSTITRFGPNNLFLGKQSYELPLMRRNAKFTVRSM). Residues 53–62 (REDNEKEEQQ) are compositionally biased toward basic and acidic residues. The segment at 53–82 (REDNEKEEQQQQKQQQTHDGGPDLTPNRTE) is disordered. 2 helical membrane passes run 130–152 (FNGG…LIPI) and 172–191 (IWNG…TEYV).

This sequence belongs to the ELIP/psbS family. Preferentially localized in the chloroplast-rich palisade parenchyma cells, in extracts of desiccated leaves, in seeds, but not in roots or untreated leaves.

It localises to the plastid. It is found in the chloroplast thylakoid membrane. Possibly exerts a protective role during water loss. The chain is Desiccation stress protein DSP-22, chloroplastic (DSP-22) from Craterostigma plantagineum (Blue gem).